The following is a 509-amino-acid chain: ATP synthase subunit alpha (509 aa).

169-176 (GDRQTGKT) lines the ATP pocket.

The protein belongs to the ATPase alpha/beta chains family. As to quaternary structure, F-type ATPases have 2 components, CF(1) - the catalytic core - and CF(0) - the membrane proton channel. CF(1) has five subunits: alpha(3), beta(3), gamma(1), delta(1), epsilon(1). CF(0) has three main subunits: a(1), b(2) and c(9-12). The alpha and beta chains form an alternating ring which encloses part of the gamma chain. CF(1) is attached to CF(0) by a central stalk formed by the gamma and epsilon chains, while a peripheral stalk is formed by the delta and b chains.

It is found in the cell inner membrane. The catalysed reaction is ATP + H2O + 4 H(+)(in) = ADP + phosphate + 5 H(+)(out). Produces ATP from ADP in the presence of a proton gradient across the membrane. The alpha chain is a regulatory subunit. This Rhizobium etli (strain ATCC 51251 / DSM 11541 / JCM 21823 / NBRC 15573 / CFN 42) protein is ATP synthase subunit alpha.